The following is a 141-amino-acid chain: Large ribosomal subunit protein uL11c (141 aa).

Belongs to the universal ribosomal protein uL11 family. As to quaternary structure, part of the ribosomal stalk of the 50S ribosomal subunit. Interacts with L10 and the large rRNA to form the base of the stalk. L10 forms an elongated spine to which L12 dimers bind in a sequential fashion forming a multimeric L10(L12)X complex.

It is found in the plastid. The protein resides in the chloroplast. Its function is as follows. Forms part of the ribosomal stalk which helps the ribosome interact with GTP-bound translation factors. This chain is Large ribosomal subunit protein uL11c, found in Thalassiosira pseudonana (Marine diatom).